The primary structure comprises 155 residues: Gastrin-releasing peptide (155 aa).

An N-terminal signal peptide occupies residues 1 to 31 (MEGVLLFWKYRALFFLVLCSLVLCKVHLSQA). The residue at position 60 (Met-60) is a Methionine amide. A propeptide spanning residues 128–155 (FSGAEDNNLKEMLDYLYQMMNMKENTSS) is cleaved from the precursor.

This sequence belongs to the bombesin/neuromedin-B/ranatensin family. As to expression, brain and stomach. In the stomach GRP was localized, at the base of the gastric pits, to occasional cells whose distribution and appearance were consistent with that of gut neuroendocrine cells.

The protein resides in the secreted. The protein localises to the cytoplasmic vesicle. It is found in the secretory vesicle lumen. Functionally, stimulates the release of gastrin and other gastrointestinal hormones. The sequence is that of Gastrin-releasing peptide (grp) from Bombina orientalis (Oriental fire-bellied toad).